Reading from the N-terminus, the 151-residue chain is Large ribosomal subunit protein bL9 (151 aa).

The protein belongs to the bacterial ribosomal protein bL9 family.

In terms of biological role, binds to the 23S rRNA. The protein is Large ribosomal subunit protein bL9 of Thermosipho melanesiensis (strain DSM 12029 / CIP 104789 / BI429).